The following is a 238-amino-acid chain: ATP synthase subunit a (238 aa).

5 consecutive transmembrane segments (helical) span residues Ile-15–Ile-35, Tyr-76–Met-96, Pro-111–Ile-131, Leu-167–Leu-187, and Ala-208–Gly-230.

It belongs to the ATPase A chain family. F-type ATPases have 2 components, CF(1) - the catalytic core - and CF(0) - the membrane proton channel. CF(1) has five subunits: alpha(3), beta(3), gamma(1), delta(1), epsilon(1). CF(0) has three main subunits: a(1), b(2) and c(9-12). The alpha and beta chains form an alternating ring which encloses part of the gamma chain. CF(1) is attached to CF(0) by a central stalk formed by the gamma and epsilon chains, while a peripheral stalk is formed by the delta and b chains.

It is found in the cell membrane. Functionally, key component of the proton channel; it plays a direct role in the translocation of protons across the membrane. The sequence is that of ATP synthase subunit a from Streptococcus pneumoniae (strain ATCC BAA-255 / R6).